Reading from the N-terminus, the 530-residue chain is Negative elongation factor A (530 aa).

Residues 89-248 enclose the HDAg domain; sequence WVLMVADILK…TPIPPSRTPL (160 aa). An NELF-C/D-binding region spans residues 125 to 188; sequence REKVSECEAS…LQKSTETAQQ (64 aa). Thr157 bears the Phosphothreonine mark. The segment at 189–248 is RNAPII-binding; that stretch reads LKRSAGVPFHAKGRGLLRKMDTTTPLKGIPKQAPFRSPTTPSVFSPSGNRTPIPPSRTPL. Disordered regions lie at residues 213-248, 266-296, and 312-409; these read PLKG…RTPL, GAGR…VENA, and SLNS…TAQT. Ser225 and Ser233 each carry phosphoserine. Residues 225 to 238 show a composition bias toward polar residues; the sequence is SPTTPSVFSPSGNR. Thr277 is modified (phosphothreonine). Residues 277–291 are compositionally biased toward basic and acidic residues; sequence TLDTEVVEKPTKEET. Low complexity predominate over residues 315–341; the sequence is SEPTLPSTSYLPSTPSVVPASSYIPSS. Ser363 carries the phosphoserine modification.

This sequence belongs to the NELF-A family. In terms of assembly, the NELF complex is composed of NELFA, NELFB, NELFCD and NELFE; NELFA and NELFCD form a stable subcomplex that binds to the N-terminus of NELFB. In vitro, the NELFA:NELFCD subcomplex binds to ssDNA and ssRNA in a sequence- and structure-dependent manner. Interacts with the RNA polymerase II complex when it is not phosphorylated by P-TEFb. Interacts with NELFB. Ubiquitous. Expressed in brain, heart, spleen, lung, liver, muscle, kidney and testis. Already expressed in 7 dpc embryos.

It is found in the nucleus. Its function is as follows. Essential component of the NELF complex, a complex that negatively regulates the elongation of transcription by RNA polymerase II. The NELF complex, which acts via an association with the DSIF complex and causes transcriptional pausing, is counteracted by the P-TEFb kinase complex. In Mus musculus (Mouse), this protein is Negative elongation factor A (Nelfa).